A 425-amino-acid polypeptide reads, in one-letter code: UDP-N-acetylglucosamine 1-carboxyvinyltransferase (425 aa).

Position 22–23 (22–23 (KN)) interacts with phosphoenolpyruvate. Arginine 93 provides a ligand contact to UDP-N-acetyl-alpha-D-glucosamine. Catalysis depends on cysteine 117, which acts as the Proton donor. Cysteine 117 carries the 2-(S-cysteinyl)pyruvic acid O-phosphothioketal modification. UDP-N-acetyl-alpha-D-glucosamine-binding positions include 122 to 126 (RPIDL), aspartate 307, and valine 329.

It belongs to the EPSP synthase family. MurA subfamily.

The protein resides in the cytoplasm. It carries out the reaction phosphoenolpyruvate + UDP-N-acetyl-alpha-D-glucosamine = UDP-N-acetyl-3-O-(1-carboxyvinyl)-alpha-D-glucosamine + phosphate. It functions in the pathway cell wall biogenesis; peptidoglycan biosynthesis. Functionally, cell wall formation. Adds enolpyruvyl to UDP-N-acetylglucosamine. This Prosthecochloris aestuarii (strain DSM 271 / SK 413) protein is UDP-N-acetylglucosamine 1-carboxyvinyltransferase.